The sequence spans 312 residues: MEFKHVPILLNECIENLNIRDGKIYVDCTVGGAGHSREIAKRIGNGKLICFDQDEDALKVAKQRLEEFGDKIIFIKDNFKNIKNDLHNLGIEKVDGILMDIGVSSYQIDEDSRGFSYMHDADLDMRMDQSNPISAKDIVNTYSKEDLENVIFKYSDEKWAKRIAEFICNARETKPINTTFELVEVIEKAIPKKVRMNQKGHSAKKTFQAIRIEVNKELDVLEQAVGDSIDLLNPEGRICIITFHSLEDKICKDIFRQRQKGCICPPEIPVCVCNHKPEIKIITRKPIEPSKEELEQNSRARSAKLRVAEKII.

S-adenosyl-L-methionine-binding positions include 33-35 (AGH), Asp52, Phe79, Asp100, and Gln107.

It belongs to the methyltransferase superfamily. RsmH family.

It localises to the cytoplasm. The enzyme catalyses cytidine(1402) in 16S rRNA + S-adenosyl-L-methionine = N(4)-methylcytidine(1402) in 16S rRNA + S-adenosyl-L-homocysteine + H(+). Its function is as follows. Specifically methylates the N4 position of cytidine in position 1402 (C1402) of 16S rRNA. The polypeptide is Ribosomal RNA small subunit methyltransferase H (Finegoldia magna (strain ATCC 29328 / DSM 20472 / WAL 2508) (Peptostreptococcus magnus)).